Consider the following 540-residue polypeptide: Cytochrome bc1 complex cytochrome b subunit (540 aa).

The helical transmembrane segment at 40-60 threads the bilayer; it reads EIALYSFIILLLTGVYLTLFF. Heme contacts are provided by H105 and H119. 3 helical membrane-spanning segments follow: residues 109–129, 137–157, and 169–189; these read ALTFMVSMTVHMLRIFFTGAF, WIIGCVLLFLGMAEGFMGYSL, and IMSAIILALPIIGTWLHWLIF. 2 residues coordinate heme: H206 and H221. 5 helical membrane-spanning segments follow: residues 207–227, 259–279, 325–345, 371–391, and 408–428; these read VLIIPGIILGLIAAHLALVWY, FGLVTFGVLALLAGLTSINAI, AFWVALLCGVLVGLLVGYPFI, LGVMAIVFYFLLTLSGGNDLF, and IGLIVLPPLAYFITYRICLGL.

This sequence belongs to the cytochrome b family. In terms of assembly, the cytochrome bc1 complex is composed of a cytochrome b (QcrB), the Rieske protein iron-sulfur (QcrA) and a diheme cytochrome c (QcrC) subunit. Heme serves as cofactor.

The protein resides in the cell membrane. The enzyme catalyses a quinol + 2 Fe(III)-[cytochrome c](out) = a quinone + 2 Fe(II)-[cytochrome c](out) + 2 H(+)(out). Its function is as follows. Cytochrome b subunit of the cytochrome bc1 complex, an essential component of the respiratory electron transport chain required for ATP synthesis. The bc1 complex catalyzes the oxidation of menaquinol and the reduction of cytochrome c in the respiratory chain. The bc1 complex operates through a Q-cycle mechanism that couples electron transfer to generation of the proton gradient that drives ATP synthesis. The chain is Cytochrome bc1 complex cytochrome b subunit (qcrB) from Corynebacterium diphtheriae (strain ATCC 700971 / NCTC 13129 / Biotype gravis).